The chain runs to 192 residues: MKELFLIIGAPGSGKTTDASLIAQADATNITHYSTGDLLRAEVASGSELGKTIDSFISKGNLVPLDVVVNTIVCALKAAPTKTIIIDGYPRSVEQMMEFDKVLSEQNEICLKGVIEVRVSEEVAKERVLGRNRGADDNEEVFYNRMKVYTEPLNEILDFYQKKKLHFIIDGERTIEPIVADMKELIKKIQSI.

12–17 provides a ligand contact to ATP; sequence GSGKTT. The segment at 34–63 is NMP; that stretch reads STGDLLRAEVASGSELGKTIDSFISKGNLV. AMP-binding positions include Thr35, Arg40, 61-63, 88-91, and Gln95; these read NLV and GYPR. The interval 130-136 is LID; that stretch reads GRNRGAD. Position 131 (Arg131) interacts with ATP. AMP-binding residues include Arg133 and Arg145. Residue Arg173 coordinates ATP.

It belongs to the adenylate kinase family. Monomer.

It localises to the cytoplasm. It catalyses the reaction AMP + ATP = 2 ADP. It functions in the pathway purine metabolism; AMP biosynthesis via salvage pathway; AMP from ADP: step 1/1. Catalyzes the reversible transfer of the terminal phosphate group between ATP and AMP. Plays an important role in cellular energy homeostasis and in adenine nucleotide metabolism. The chain is Adenylate kinase from Campylobacter jejuni subsp. jejuni serotype O:6 (strain 81116 / NCTC 11828).